Here is a 215-residue protein sequence, read N- to C-terminus: ATP-dependent Clp protease proteolytic subunit 1 (215 aa).

S111 acts as the Nucleophile in catalysis. The active site involves H136.

It belongs to the peptidase S14 family. As to quaternary structure, fourteen ClpP subunits assemble into 2 heptameric rings which stack back to back to give a disk-like structure with a central cavity, resembling the structure of eukaryotic proteasomes.

The protein resides in the cytoplasm. It carries out the reaction Hydrolysis of proteins to small peptides in the presence of ATP and magnesium. alpha-casein is the usual test substrate. In the absence of ATP, only oligopeptides shorter than five residues are hydrolyzed (such as succinyl-Leu-Tyr-|-NHMec, and Leu-Tyr-Leu-|-Tyr-Trp, in which cleavage of the -Tyr-|-Leu- and -Tyr-|-Trp bonds also occurs).. In terms of biological role, cleaves peptides in various proteins in a process that requires ATP hydrolysis. Has a chymotrypsin-like activity. Plays a major role in the degradation of misfolded proteins. The polypeptide is ATP-dependent Clp protease proteolytic subunit 1 (Gluconobacter oxydans (strain 621H) (Gluconobacter suboxydans)).